The following is a 275-amino-acid chain: MSNLQNIIECAFERVAEITPTNAEAELRAAVDEAIEGLDKGIYRVAEKNEQGEWIVNQWLKKAVLLSFRLNDNVVVDGAETKYYDKVPVKFADYDVERFKTEGFRAVPGAVVRKGSHISKGVVLMPSFVNIGAYVGEGTMVDTWATVGSCAQIGKNVHLSGGVGIGGVLEPLQANPTIIGDNCFIGARSEIVEGVIVEEGCVISMGVFIGQSTKIYDRETGEIFYGRVPAGSVVVSGSLPSKCGKYNLYCAVIVKKVDAKTLGKVGINELLRTIE.

The substrate site is built by Arg-105 and Asp-142.

This sequence belongs to the transferase hexapeptide repeat family. Homotrimer.

It is found in the cytoplasm. It carries out the reaction (S)-2,3,4,5-tetrahydrodipicolinate + succinyl-CoA + H2O = (S)-2-succinylamino-6-oxoheptanedioate + CoA. It participates in amino-acid biosynthesis; L-lysine biosynthesis via DAP pathway; LL-2,6-diaminopimelate from (S)-tetrahydrodipicolinate (succinylase route): step 1/3. This chain is 2,3,4,5-tetrahydropyridine-2,6-dicarboxylate N-succinyltransferase, found in Histophilus somni (strain 129Pt) (Haemophilus somnus).